The chain runs to 259 residues: Pyrroloquinoline-quinone synthase (259 aa).

This sequence belongs to the PqqC family.

It carries out the reaction 6-(2-amino-2-carboxyethyl)-7,8-dioxo-1,2,3,4,7,8-hexahydroquinoline-2,4-dicarboxylate + 3 O2 = pyrroloquinoline quinone + 2 H2O2 + 2 H2O + H(+). It participates in cofactor biosynthesis; pyrroloquinoline quinone biosynthesis. Its function is as follows. Ring cyclization and eight-electron oxidation of 3a-(2-amino-2-carboxyethyl)-4,5-dioxo-4,5,6,7,8,9-hexahydroquinoline-7,9-dicarboxylic-acid to PQQ. The protein is Pyrroloquinoline-quinone synthase of Bradyrhizobium sp. (strain ORS 278).